Consider the following 383-residue polypeptide: Acetylornithine deacetylase (383 aa).

Position 80 (H80) interacts with Zn(2+). The active site involves D82. D112 serves as a coordination point for Zn(2+). E144 is an active-site residue. Positions 145, 169, and 355 each coordinate Zn(2+).

It belongs to the peptidase M20A family. ArgE subfamily. In terms of assembly, homodimer. Zn(2+) serves as cofactor. The cofactor is Co(2+). It depends on glutathione as a cofactor.

It is found in the cytoplasm. The enzyme catalyses N(2)-acetyl-L-ornithine + H2O = L-ornithine + acetate. It functions in the pathway amino-acid biosynthesis; L-arginine biosynthesis; L-ornithine from N(2)-acetyl-L-ornithine (linear): step 1/1. Functionally, catalyzes the hydrolysis of the amide bond of N(2)-acetylated L-amino acids. Cleaves the acetyl group from N-acetyl-L-ornithine to form L-ornithine, an intermediate in L-arginine biosynthesis pathway, and a branchpoint in the synthesis of polyamines. This Escherichia coli O17:K52:H18 (strain UMN026 / ExPEC) protein is Acetylornithine deacetylase.